Consider the following 156-residue polypeptide: 6,7-dimethyl-8-ribityllumazine synthase (156 aa).

5-amino-6-(D-ribitylamino)uracil-binding positions include phenylalanine 23, 57–59 (SFE), and 81–83 (AVI). Residue 86-87 (GT) participates in (2S)-2-hydroxy-3-oxobutyl phosphate binding. Histidine 89 functions as the Proton donor in the catalytic mechanism. Position 114 (phenylalanine 114) interacts with 5-amino-6-(D-ribitylamino)uracil. Position 128 (arginine 128) interacts with (2S)-2-hydroxy-3-oxobutyl phosphate.

Belongs to the DMRL synthase family. In terms of assembly, forms an icosahedral capsid composed of 60 subunits, arranged as a dodecamer of pentamers.

It carries out the reaction (2S)-2-hydroxy-3-oxobutyl phosphate + 5-amino-6-(D-ribitylamino)uracil = 6,7-dimethyl-8-(1-D-ribityl)lumazine + phosphate + 2 H2O + H(+). It participates in cofactor biosynthesis; riboflavin biosynthesis; riboflavin from 2-hydroxy-3-oxobutyl phosphate and 5-amino-6-(D-ribitylamino)uracil: step 1/2. Catalyzes the formation of 6,7-dimethyl-8-ribityllumazine by condensation of 5-amino-6-(D-ribitylamino)uracil with 3,4-dihydroxy-2-butanone 4-phosphate. This is the penultimate step in the biosynthesis of riboflavin. The sequence is that of 6,7-dimethyl-8-ribityllumazine synthase from Alkalilimnicola ehrlichii (strain ATCC BAA-1101 / DSM 17681 / MLHE-1).